The sequence spans 281 residues: Sulfur carrier protein FdhD (281 aa).

The Cysteine persulfide intermediate role is filled by cysteine 117.

Belongs to the FdhD family.

It is found in the cytoplasm. Its function is as follows. Required for formate dehydrogenase (FDH) activity. Acts as a sulfur carrier protein that transfers sulfur from IscS to the molybdenum cofactor prior to its insertion into FDH. This is Sulfur carrier protein FdhD from Xanthomonas axonopodis pv. citri (strain 306).